The following is a 258-amino-acid chain: UPF0246 protein YaaA (258 aa).

The protein belongs to the UPF0246 family.

This Escherichia coli (strain 55989 / EAEC) protein is UPF0246 protein YaaA.